A 261-amino-acid chain; its full sequence is tRNA pseudouridine synthase A (261 aa).

The active-site Nucleophile is Asp-52. A substrate-binding site is contributed by Tyr-110.

The protein belongs to the tRNA pseudouridine synthase TruA family. In terms of assembly, homodimer.

The catalysed reaction is uridine(38/39/40) in tRNA = pseudouridine(38/39/40) in tRNA. Functionally, formation of pseudouridine at positions 38, 39 and 40 in the anticodon stem and loop of transfer RNAs. The sequence is that of tRNA pseudouridine synthase A from Coxiella burnetii (strain CbuK_Q154) (Coxiella burnetii (strain Q154)).